The primary structure comprises 197 residues: Glycerol-3-phosphate acyltransferase (197 aa).

4 helical membrane-spanning segments follow: residues 1–21 (MTAL…GLLV), 69–89 (LPML…AVVG), 110–130 (VMLF…LVVL), and 152–172 (VFFT…SFIF).

This sequence belongs to the PlsY family. In terms of assembly, probably interacts with PlsX.

The protein localises to the cell membrane. It catalyses the reaction an acyl phosphate + sn-glycerol 3-phosphate = a 1-acyl-sn-glycero-3-phosphate + phosphate. The protein operates within lipid metabolism; phospholipid metabolism. Catalyzes the transfer of an acyl group from acyl-phosphate (acyl-PO(4)) to glycerol-3-phosphate (G3P) to form lysophosphatidic acid (LPA). This enzyme utilizes acyl-phosphate as fatty acyl donor, but not acyl-CoA or acyl-ACP. The protein is Glycerol-3-phosphate acyltransferase of Geobacillus kaustophilus (strain HTA426).